The primary structure comprises 266 residues: Ciliary microtubule inner protein 4 (266 aa).

Polar residues-rich tracts occupy residues 1–15 (MELS…LTRT) and 24–38 (QDMN…SLDN). The disordered stretch occupies residues 1-124 (MELSHRQGTT…SPEQRTVPLS (124 aa)). A compositionally biased stretch (low complexity) spans 47–63 (LSQSPLGSSLGQGYLET). Positions 81 to 102 (HPEDLKKGASRSSSRDARETFR) are enriched in basic and acidic residues.

As to expression, only detected in testis, in the spermatids and sperm within the seminiferous tubules (at protein level).

The protein resides in the cytoplasmic vesicle. Its subcellular location is the secretory vesicle. The protein localises to the acrosome. It is found in the cell projection. It localises to the cilium. The protein resides in the flagellum. Functionally, seems to be associated with spermiogenesis but is not essential for sperm development and male fertility. The sequence is that of Ciliary microtubule inner protein 4 (Cimip4) from Mus musculus (Mouse).